A 186-amino-acid polypeptide reads, in one-letter code: Potassium-transporting ATPase KdpC subunit (186 aa).

A helical transmembrane segment spans residues 9-29 (AAVVLFGGCLLVLGLLYPLAM).

Belongs to the KdpC family. The system is composed of three essential subunits: KdpA, KdpB and KdpC.

The protein localises to the cell membrane. Its function is as follows. Part of the high-affinity ATP-driven potassium transport (or Kdp) system, which catalyzes the hydrolysis of ATP coupled with the electrogenic transport of potassium into the cytoplasm. This subunit acts as a catalytic chaperone that increases the ATP-binding affinity of the ATP-hydrolyzing subunit KdpB by the formation of a transient KdpB/KdpC/ATP ternary complex. The chain is Potassium-transporting ATPase KdpC subunit from Methanosphaerula palustris (strain ATCC BAA-1556 / DSM 19958 / E1-9c).